Consider the following 584-residue polypeptide: Aspartate--tRNA(Asp/Asn) ligase (584 aa).

Residue Glu174 coordinates L-aspartate. The interval 198–201 (QLFK) is aspartate. Arg220 lines the L-aspartate pocket. Residues 220–222 (RDE) and Gln229 each bind ATP. L-aspartate is bound at residue His447. Glu480 contacts ATP. Arg487 provides a ligand contact to L-aspartate. 532-535 (GFDR) provides a ligand contact to ATP.

It belongs to the class-II aminoacyl-tRNA synthetase family. Type 1 subfamily. Homodimer.

The protein localises to the cytoplasm. The enzyme catalyses tRNA(Asx) + L-aspartate + ATP = L-aspartyl-tRNA(Asx) + AMP + diphosphate. In terms of biological role, aspartyl-tRNA synthetase with relaxed tRNA specificity since it is able to aspartylate not only its cognate tRNA(Asp) but also tRNA(Asn). Reaction proceeds in two steps: L-aspartate is first activated by ATP to form Asp-AMP and then transferred to the acceptor end of tRNA(Asp/Asn). This is Aspartate--tRNA(Asp/Asn) ligase from Endomicrobium trichonymphae.